The following is a 152-amino-acid chain: MSIKNKFKSFFTLDDEEYEYEYIDEEREPVQEEKGTKDKAAFQERPQTGKQNVVSLQSVQKSSKVVLSEPRVYAEAQEIADHIKNRRAVVVNLQRIQHDQAKRIIDFLSGTVYAIGGDIQRIGSNIFLCTPDNVDVSGTISELLTEEEPQRW.

The disordered stretch occupies residues 25 to 54; that stretch reads EEREPVQEEKGTKDKAAFQERPQTGKQNVV. Basic and acidic residues predominate over residues 28–42; that stretch reads EPVQEEKGTKDKAAF.

This sequence belongs to the SepF family. As to quaternary structure, homodimer. Interacts with FtsZ.

It localises to the cytoplasm. Cell division protein that is part of the divisome complex and is recruited early to the Z-ring. Probably stimulates Z-ring formation, perhaps through the cross-linking of FtsZ protofilaments. Its function overlaps with FtsA. The sequence is that of Cell division protein SepF from Bacillus pumilus (strain SAFR-032).